The following is a 496-amino-acid chain: Lysosomal Pro-X carboxypeptidase (496 aa).

A signal peptide spans 1–21 (MGRRALLLLLLSFLAPWTTIA). The propeptide occupies 22–45 (LRPALRALGSLHLPTNPTSLPAVA). N-linked (GlcNAc...) asparagine glycans are attached at residues asparagine 47 and asparagine 101. Serine 179 acts as the Charge relay system in catalysis. The interval 194-334 (HMVVGALAAS…QNIFQALNVY (141 aa)) is SKS domain. Cystine bridges form between cysteine 215-cysteine 372, cysteine 233-cysteine 310, cysteine 264-cysteine 343, and cysteine 364-cysteine 394. Residues asparagine 317, asparagine 336, and asparagine 345 are each glycosylated (N-linked (GlcNAc...) asparagine). A glycan (N-linked (GlcNAc...) asparagine) is linked at asparagine 415. Residues aspartate 430 and histidine 455 each act as charge relay system in the active site.

The protein belongs to the peptidase S28 family. In terms of assembly, homodimer.

It is found in the lysosome. The catalysed reaction is Cleavage of a -Pro-|-Xaa bond to release a C-terminal amino acid.. In terms of biological role, cleaves C-terminal amino acids linked to proline in peptides such as angiotensin II, III and des-Arg9-bradykinin. This cleavage occurs at acidic pH, but enzymatic activity is retained with some substrates at neutral pH. The chain is Lysosomal Pro-X carboxypeptidase (PRCP) from Pongo abelii (Sumatran orangutan).